The sequence spans 1393 residues: DNA-directed RNA polymerase subunit beta'' (1393 aa).

C224, C295, C302, and C305 together coordinate Zn(2+).

It belongs to the RNA polymerase beta' chain family. RpoC2 subfamily. In plastids the minimal PEP RNA polymerase catalytic core is composed of four subunits: alpha, beta, beta', and beta''. When a (nuclear-encoded) sigma factor is associated with the core the holoenzyme is formed, which can initiate transcription. Requires Zn(2+) as cofactor.

The protein localises to the plastid. It is found in the chloroplast. It catalyses the reaction RNA(n) + a ribonucleoside 5'-triphosphate = RNA(n+1) + diphosphate. Its function is as follows. DNA-dependent RNA polymerase catalyzes the transcription of DNA into RNA using the four ribonucleoside triphosphates as substrates. This chain is DNA-directed RNA polymerase subunit beta'', found in Manihot esculenta (Cassava).